The following is a 630-amino-acid chain: Ankyrin repeat protein OPG025 (630 aa).

6 ANK repeats span residues 36–69 (DGET…YKNI), 70–100 (NDFD…EINS), 103–134 (NGIN…PTCS), 174–210 (MGKT…EMCH), 338–367 (KHIN…VVVN), and 408–437 (HGRS…DINI).

This sequence belongs to the orthopoxvirus OPG025 family. As to quaternary structure, interacts with components of host SCF complex CUL1 and SKP1 and components of the cullin deneddylation/COP9 signalosome complex subunits COPS7A and COPS7B.

Plays a role in the inhibition of host immune repsonse by counteracting the action of interferons on early events in the viral replication cycle. The protein is Ankyrin repeat protein OPG025 (OPG025) of Monkeypox virus.